The sequence spans 304 residues: MPEAAIEFDKVKKSYGEKTVVDGLSFHVAPGECFGLLGPNGAGKTTTLRMLLGIAAPDAGTIRLCGEPIPRRARVARARVGVVPQFDNLDPDFTVRENLLVFGRYFGMSAAQCRAMVPPLLEFARLESKADARVSELSGGMKRRLTLARALVNDPDVLIMDEPTTGLDPQARHLIWERLRSLLARGKTILLTTHFMEEAERLCHRLCVIEEGRKIAEGAPSALIASEIGCDVIEIFGPDPVALRDELAPLVERTEISGETLFCYVIDAQPVHARLKQRADLRYLHRPANLEDVFLRLTGREMQD.

Positions 6 to 236 constitute an ABC transporter domain; that stretch reads IEFDKVKKSY…EIGCDVIEIF (231 aa). 38-45 serves as a coordination point for ATP; that stretch reads GPNGAGKT.

The protein belongs to the ABC transporter superfamily. Lipooligosaccharide exporter (TC 3.A.1.102) family. In terms of assembly, the complex is composed of two ATP-binding proteins (NodI) and two transmembrane proteins (NodJ).

Its subcellular location is the cell inner membrane. Functionally, part of the ABC transporter complex NodIJ involved in the export of the nodulation factors (Nod factors), the bacterial signal molecules that induce symbiosis and subsequent nodulation induction. Nod factors are LCO (lipo-chitin oligosaccharide), a modified beta-1,4-linked N-acetylglucosamine oligosaccharide. This subunit is responsible for energy coupling to the transport system. The polypeptide is Nod factor export ATP-binding protein I (Paraburkholderia xenovorans (strain LB400)).